The sequence spans 43 residues: Ferritin light chain (43 aa).

A Ferritin-like diiron domain is found at 1–43 (MEAALLVEKNLNQALLDLHGLASARGDPHICDFLENHFLDEEV).

The protein belongs to the ferritin family. In terms of assembly, oligomer of 24 subunits. There are two types of subunits: L (light) chain and H (heavy) chain. The major chain can be light or heavy, depending on the species and tissue type. The functional molecule forms a roughly spherical shell with a diameter of 12 nm and contains a central cavity into which the insoluble mineral iron core is deposited. Interacts with NCOA4.

The protein localises to the cytoplasmic vesicle. Its subcellular location is the autophagosome. It localises to the cytoplasm. The protein resides in the autolysosome. Functionally, stores iron in a soluble, non-toxic, readily available form. Important for iron homeostasis. Iron is taken up in the ferrous form and deposited as ferric hydroxides after oxidation. Also plays a role in delivery of iron to cells. Mediates iron uptake in capsule cells of the developing kidney. Delivery to lysosomes by the cargo receptor NCOA4 for autophagic degradation and release or iron. This chain is Ferritin light chain (FTL), found in Ovis aries (Sheep).